We begin with the raw amino-acid sequence, 290 residues long: Pyridoxal kinase PdxY (290 aa).

Residues Ser-12 and 47-48 (TQ) each bind substrate. Residues Asp-114, Glu-151, Lys-184, and 211-214 (RPLL) each bind ATP. Asp-225 provides a ligand contact to substrate.

Belongs to the pyridoxine kinase family. PdxY subfamily. In terms of assembly, homodimer. It depends on Mg(2+) as a cofactor.

It catalyses the reaction pyridoxal + ATP = pyridoxal 5'-phosphate + ADP + H(+). It participates in cofactor metabolism; pyridoxal 5'-phosphate salvage; pyridoxal 5'-phosphate from pyridoxal: step 1/1. In terms of biological role, pyridoxal kinase involved in the salvage pathway of pyridoxal 5'-phosphate (PLP). Catalyzes the phosphorylation of pyridoxal to PLP. This Pseudomonas putida (strain ATCC 700007 / DSM 6899 / JCM 31910 / BCRC 17059 / LMG 24140 / F1) protein is Pyridoxal kinase PdxY.